The primary structure comprises 257 residues: Glutamate racemase (257 aa).

Substrate contacts are provided by residues 12–13 (DS) and 44–45 (YG). Cys75 acts as the Proton donor/acceptor in catalysis. Residue 76 to 77 (NT) participates in substrate binding. Cys185 (proton donor/acceptor) is an active-site residue. Residue 186–187 (TH) participates in substrate binding.

Belongs to the aspartate/glutamate racemases family.

It catalyses the reaction L-glutamate = D-glutamate. The protein operates within cell wall biogenesis; peptidoglycan biosynthesis. Provides the (R)-glutamate required for cell wall biosynthesis. The polypeptide is Glutamate racemase (Clostridium botulinum (strain ATCC 19397 / Type A)).